Consider the following 326-residue polypeptide: Protein ORF5 in retron Ec67 (326 aa).

A disordered region spans residues 1 to 24 (MGKSKKNRAAATNQLKHKSQTSAE). The segment covering 10–24 (AATNQLKHKSQTSAE) has biased composition (polar residues).

The protein belongs to the phage portal family. PBSX subfamily.

The chain is Protein ORF5 in retron Ec67 from Escherichia coli.